The sequence spans 442 residues: ATP-dependent protease ATPase subunit HslU (442 aa).

Residues I18, 60–65, D255, E320, and R392 contribute to the ATP site; that span reads GVGKTE.

Belongs to the ClpX chaperone family. HslU subfamily. A double ring-shaped homohexamer of HslV is capped on each side by a ring-shaped HslU homohexamer. The assembly of the HslU/HslV complex is dependent on binding of ATP.

It localises to the cytoplasm. In terms of biological role, ATPase subunit of a proteasome-like degradation complex; this subunit has chaperone activity. The binding of ATP and its subsequent hydrolysis by HslU are essential for unfolding of protein substrates subsequently hydrolyzed by HslV. HslU recognizes the N-terminal part of its protein substrates and unfolds these before they are guided to HslV for hydrolysis. This is ATP-dependent protease ATPase subunit HslU from Shewanella putrefaciens (strain CN-32 / ATCC BAA-453).